A 422-amino-acid chain; its full sequence is Acylglycerol kinase, mitochondrial (422 aa).

At Lys-6 the chain carries N6-acetyllysine. A hydrophobic region spans residues 15 to 31 (TTAGLCLLTWGGHWLYG). Residues 58–199 (AQVKKATVFL…LDVLQIKGEK (142 aa)) form the DAGKc domain. The segment at 249-271 (QASISYTGPTERPPNEPEETPVQ) is disordered.

It belongs to the AGK family. As to quaternary structure, component of the TIM22 complex, which core is composed of TIMM22, associated with TIMM10 (TIMM10A and/or TIMM10B), TIMM9, AGK and TIMM29. Interacts with SMIM26. Mg(2+) serves as cofactor. Highly expressed in muscle, heart, kidney and brain.

It is found in the mitochondrion inner membrane. The protein resides in the mitochondrion intermembrane space. It catalyses the reaction a monoacylglycerol + ATP = a monoacyl-sn-glycero-3-phosphate + ADP + H(+). It carries out the reaction a 1,2-diacyl-sn-glycerol + ATP = a 1,2-diacyl-sn-glycero-3-phosphate + ADP + H(+). The enzyme catalyses an N-acylsphing-4-enine + ATP = an N-acylsphing-4-enine 1-phosphate + ADP + H(+). The catalysed reaction is 1-(9Z-octadecenoyl)-sn-glycerol + ATP = 1-(9Z-octadecenoyl)-sn-glycero-3-phosphate + ADP + H(+). It catalyses the reaction 1,2-di-(9Z-octadecenoyl)-sn-glycerol + ATP = 1,2-di-(9Z-octadecenoyl)-sn-glycero-3-phosphate + ADP + H(+). It carries out the reaction a 1-acyl-sn-glycerol + ATP = a 1-acyl-sn-glycero-3-phosphate + ADP + H(+). The enzyme catalyses 1-hexadecanoyl-sn-glycerol + ATP = 1-hexadecanoyl-sn-glycero-3-phosphate + ADP + H(+). The catalysed reaction is a 2-acylglycerol + ATP = a 2-acyl-sn-glycerol 3-phosphate + ADP + H(+). It catalyses the reaction 2-(5Z,8Z,11Z,14Z-eicosatetraenoyl)-glycerol + ATP = 2-(5Z,8Z,11Z,14Z-eicosatetraenoyl)-sn-glycero-3-phosphate + ADP + H(+). It carries out the reaction 1-(5Z,8Z,11Z,14Z-eicosatetraenoyl)-sn-glycerol + ATP = 1-(5Z,8Z,11Z,14Z-eicosatetraenoyl)-sn-glycero-3-phosphate + ADP + H(+). The enzyme catalyses N-(hexanoyl)sphing-4-enine + ATP = N-hexanoylsphing-4-enine 1-phosphate + ADP + H(+). It participates in lipid metabolism; glycerolipid metabolism. Its function is as follows. Lipid kinase that can phosphorylate both monoacylglycerol and diacylglycerol to form lysophosphatidic acid (LPA) and phosphatidic acid (PA), respectively. Does not phosphorylate sphingosine. Phosphorylates ceramide. Phosphorylates 1,2-dioleoylglycerol more rapidly than 2,3-dioleoylglycerol. Independently of its lipid kinase activity, acts as a component of the TIM22 complex. The TIM22 complex mediates the import and insertion of multi-pass transmembrane proteins into the mitochondrial inner membrane by forming a twin-pore translocase that uses the membrane potential as the external driving force. In the TIM22 complex, required for the import of a subset of metabolite carriers into mitochondria, such as ANT1/SLC25A4 and SLC25A24, while it is not required for the import of TIMM23. Overexpression increases the formation and secretion of LPA, resulting in transactivation of EGFR and activation of the downstream MAPK signaling pathway, leading to increased cell growth. In Homo sapiens (Human), this protein is Acylglycerol kinase, mitochondrial.